The chain runs to 349 residues: Magnesium-protoporphyrin IX monomethyl ester [oxidative] cyclase (349 aa).

Residues 1 to 10 show a composition bias toward low complexity; it reads MTATTATAPT. The tract at residues 1–23 is disordered; it reads MTATTATAPTMRGGGRNELPPHL.

Belongs to the AcsF family. Fe cation serves as cofactor.

The catalysed reaction is Mg-protoporphyrin IX 13-monomethyl ester + 3 NADPH + 3 O2 + 2 H(+) = 3,8-divinyl protochlorophyllide a + 3 NADP(+) + 5 H2O. The protein operates within porphyrin-containing compound metabolism; chlorophyll biosynthesis (light-independent). Catalyzes the formation of the isocyclic ring in chlorophyll biosynthesis. Mediates the cyclase reaction, which results in the formation of divinylprotochlorophyllide (Pchlide) characteristic of all chlorophylls from magnesium-protoporphyrin IX 13-monomethyl ester (MgPMME). This is Magnesium-protoporphyrin IX monomethyl ester [oxidative] cyclase from Prochlorococcus marinus (strain MIT 9313).